The following is a 70-amino-acid chain: Protein SlyX homolog (70 aa).

Belongs to the SlyX family.

The protein is Protein SlyX homolog of Shewanella sp. (strain MR-4).